Reading from the N-terminus, the 391-residue chain is Alkanesulfonate monooxygenase (391 aa).

It belongs to the SsuD family.

It catalyses the reaction an alkanesulfonate + FMNH2 + O2 = an aldehyde + FMN + sulfite + H2O + 2 H(+). Functionally, catalyzes the desulfonation of aliphatic sulfonates. The chain is Alkanesulfonate monooxygenase from Rhodopseudomonas palustris (strain ATCC BAA-98 / CGA009).